The following is a 253-amino-acid chain: Small ribosomal subunit protein uS2 (253 aa).

The protein belongs to the universal ribosomal protein uS2 family.

This Cereibacter sphaeroides (strain ATCC 17023 / DSM 158 / JCM 6121 / CCUG 31486 / LMG 2827 / NBRC 12203 / NCIMB 8253 / ATH 2.4.1.) (Rhodobacter sphaeroides) protein is Small ribosomal subunit protein uS2.